Reading from the N-terminus, the 262-residue chain is tRNA pseudouridine synthase A (262 aa).

Asp51 (nucleophile) is an active-site residue. Tyr109 is a substrate binding site.

The protein belongs to the tRNA pseudouridine synthase TruA family. As to quaternary structure, homodimer.

The catalysed reaction is uridine(38/39/40) in tRNA = pseudouridine(38/39/40) in tRNA. Formation of pseudouridine at positions 38, 39 and 40 in the anticodon stem and loop of transfer RNAs. This is tRNA pseudouridine synthase A from Actinobacillus pleuropneumoniae serotype 3 (strain JL03).